A 472-amino-acid polypeptide reads, in one-letter code: Eukaryotic translation initiation factor 2 subunit 3, Y-linked (472 aa).

N-acetylalanine is present on Ala2. Ser16 is modified (phosphoserine). Positions 39–247 (QATINIGTIG…YIVKKIPVPL (209 aa)) constitute a tr-type G domain. Positions 48-55 (GHVAHGKS) are G1. 51–56 (AHGKST) is a GTP binding site. Positions 76 to 80 (NITIK) are G2. The segment at 134 to 137 (DCPG) is G3. GTP is bound by residues 190–193 (NKID) and 225–227 (SAQ). The segment at 190–193 (NKID) is G4. Positions 225 to 227 (SAQ) are G5.

It belongs to the TRAFAC class translation factor GTPase superfamily. Classic translation factor GTPase family. EIF2G subfamily. In terms of assembly, eIF2 is a heterotrimer composed of an alpha (EIF2S1), a beta (EIF2S2) and a gamma (Eif2s3x and Eif2s3y) chain. eIF2 is member of the 43S pre-initiation complex (43S PIC). As to expression, widely expressed in males.

It carries out the reaction GTP + H2O = GDP + phosphate + H(+). Member of the eIF2 complex that functions in the early steps of protein synthesis by forming a ternary complex with GTP and initiator tRNA. This complex binds to a 40S ribosomal subunit, followed by mRNA binding to form the 43S pre-initiation complex (43S PIC). Junction of the 60S ribosomal subunit to form the 80S initiation complex is preceded by hydrolysis of the GTP bound to eIF2 and release of an eIF2-GDP binary complex. In order for eIF2 to recycle and catalyze another round of initiation, the GDP bound to eIF2 must exchange with GTP by way of a reaction catalyzed by eIF-2B. Along with its paralog on chromosome X, may contribute to spermatogenesis up to the round spermatid stage. The polypeptide is Eukaryotic translation initiation factor 2 subunit 3, Y-linked (Eif2s3y) (Rattus norvegicus (Rat)).